The sequence spans 112 residues: Putative pterin-4-alpha-carbinolamine dehydratase (112 aa).

This sequence belongs to the pterin-4-alpha-carbinolamine dehydratase family.

The enzyme catalyses (4aS,6R)-4a-hydroxy-L-erythro-5,6,7,8-tetrahydrobiopterin = (6R)-L-erythro-6,7-dihydrobiopterin + H2O. This chain is Putative pterin-4-alpha-carbinolamine dehydratase, found in Syntrophotalea carbinolica (strain DSM 2380 / NBRC 103641 / GraBd1) (Pelobacter carbinolicus).